A 283-amino-acid polypeptide reads, in one-letter code: 9,11-endoperoxide prostaglandin H2 reductase (283 aa).

NADP(+) contacts are provided by residues 23 to 24 and Asp-48; that span reads VW. Tyr-53 acts as the Proton donor in catalysis. Position 111 (His-111) interacts with substrate. NADP(+)-binding positions include 140 to 141, Gln-162, 188 to 193, 234 to 236, and 240 to 244; these read SN, WSPLGS, KST, and RIQEN. The disordered stretch occupies residues 264–283; sequence NEDKRIGGDPDNFFPGGEEA.

It belongs to the aldo/keto reductase family. As to quaternary structure, monomer.

The protein resides in the cytoplasm. It carries out the reaction prostaglandin F2alpha + NADP(+) = prostaglandin H2 + NADPH + H(+). It functions in the pathway lipid metabolism; prostaglandin biosynthesis. Functionally, catalyzes the NADP-dependent formation of prostaglandin F2-alpha from prostaglandin H2. Also has aldo/ketoreductase activity towards the synthetic substrates 9,10-phenanthrenequinone and p-nitrobenzaldehyde. This chain is 9,11-endoperoxide prostaglandin H2 reductase, found in Trypanosoma cruzi (strain CL Brener).